A 473-amino-acid chain; its full sequence is Photosystem II CP43 reaction center protein (473 aa).

Residues 1–14 (MKTLYSLRRFYHVE) constitute a propeptide that is removed on maturation. Threonine 15 carries the post-translational modification N-acetylthreonine. A Phosphothreonine modification is found at threonine 15. 5 helical membrane passes run 69 to 93 (LFEV…PHLA), 134 to 155 (LLGP…KDRN), 178 to 200 (KALY…RKIT), 255 to 275 (KPFA…LSYS), and 291 to 312 (WFNN…ASQA). Glutamate 367 is a binding site for [CaMn4O5] cluster. The chain crosses the membrane as a helical span at residues 447–471 (RARAAAAGFEKGIDRDFEPVLSMTP).

It belongs to the PsbB/PsbC family. PsbC subfamily. PSII is composed of 1 copy each of membrane proteins PsbA, PsbB, PsbC, PsbD, PsbE, PsbF, PsbH, PsbI, PsbJ, PsbK, PsbL, PsbM, PsbT, PsbX, PsbY, PsbZ, Psb30/Ycf12, at least 3 peripheral proteins of the oxygen-evolving complex and a large number of cofactors. It forms dimeric complexes. Binds multiple chlorophylls and provides some of the ligands for the Ca-4Mn-5O cluster of the oxygen-evolving complex. It may also provide a ligand for a Cl- that is required for oxygen evolution. PSII binds additional chlorophylls, carotenoids and specific lipids. is required as a cofactor.

Its subcellular location is the plastid. It is found in the chloroplast thylakoid membrane. Its function is as follows. One of the components of the core complex of photosystem II (PSII). It binds chlorophyll and helps catalyze the primary light-induced photochemical processes of PSII. PSII is a light-driven water:plastoquinone oxidoreductase, using light energy to abstract electrons from H(2)O, generating O(2) and a proton gradient subsequently used for ATP formation. The protein is Photosystem II CP43 reaction center protein of Manihot esculenta (Cassava).